Reading from the N-terminus, the 83-residue chain is Mu-theraphotoxin-Hhn2j 3 (83 aa).

A signal peptide spans 1 to 21; that stretch reads MKALMFLALAGLVLLFVVGYA. Positions 22–48 are excised as a propeptide; it reads SESEEKEFPIELLSKIFAVDVFKGEER. 3 disulfides stabilise this stretch: Cys50-Cys65, Cys57-Cys70, and Cys64-Cys77. A Leucine amide modification is found at Leu81.

This sequence belongs to the neurotoxin 10 (Hwtx-1) family. 15 (Hntx-3) subfamily. As to quaternary structure, monomer. In terms of tissue distribution, expressed by the venom gland.

It localises to the secreted. Lethal neurotoxin. Selectively blocks tetrodotoxin-sensitive voltage-gated sodium channels (Nav). Does not affect tetrodotoxin-resistant voltage-gated sodium channels or calcium channels. The sequence is that of Mu-theraphotoxin-Hhn2j 3 from Cyriopagopus hainanus (Chinese bird spider).